The chain runs to 211 residues: Superoxide dismutase [Fe] (211 aa).

Fe cation is bound by residues H34, H85, D171, and H175.

This sequence belongs to the iron/manganese superoxide dismutase family. Requires Fe cation as cofactor.

It catalyses the reaction 2 superoxide + 2 H(+) = H2O2 + O2. Destroys superoxide anion radicals which are normally produced within the cells and which are toxic to biological systems. The protein is Superoxide dismutase [Fe] (sod) of Acidianus ambivalens (Desulfurolobus ambivalens).